The sequence spans 99 residues: NADH-quinone oxidoreductase subunit K (99 aa).

3 helical membrane-spanning segments follow: residues 3-23, 28-48, and 59-79; these read PDNYLYLSALLFTIGAAGVLL, IVVFMCVELMLNAANLAFVAF, and VVAFFTMVVAACEVVIGLAII.

Belongs to the complex I subunit 4L family. NDH-1 is composed of 14 different subunits. Subunits NuoA, H, J, K, L, M, N constitute the membrane sector of the complex.

The protein localises to the cell membrane. It carries out the reaction a quinone + NADH + 5 H(+)(in) = a quinol + NAD(+) + 4 H(+)(out). In terms of biological role, NDH-1 shuttles electrons from NADH, via FMN and iron-sulfur (Fe-S) centers, to quinones in the respiratory chain. The immediate electron acceptor for the enzyme in this species is believed to be a menaquinone. Couples the redox reaction to proton translocation (for every two electrons transferred, four hydrogen ions are translocated across the cytoplasmic membrane), and thus conserves the redox energy in a proton gradient. This chain is NADH-quinone oxidoreductase subunit K, found in Mycobacterium sp. (strain JLS).